The following is a 282-amino-acid chain: HTH-type transcriptional activator RhaR (282 aa).

The HTH araC/xylS-type domain occupies 179–277; it reads DKLITRLAAS…GMTPSQWRHL (99 aa). 2 consecutive DNA-binding regions (H-T-H motif) follow at residues 196–217 and 244–267; these read DKFCDEASCSERVLRQQFRQQT and ISDISTECGFEDSNYFSVVFTRET.

Binds DNA as a dimer.

The protein localises to the cytoplasm. In terms of biological role, activates expression of the rhaSR operon in response to L-rhamnose. The sequence is that of HTH-type transcriptional activator RhaR from Escherichia coli O1:K1 / APEC.